A 99-amino-acid chain; its full sequence is A-type ATP synthase subunit F (99 aa).

This sequence belongs to the V-ATPase F subunit family. As to quaternary structure, has multiple subunits with at least A(3), B(3), C, D, E, F, H, I and proteolipid K(x).

The protein resides in the cell membrane. Its function is as follows. Component of the A-type ATP synthase that produces ATP from ADP in the presence of a proton gradient across the membrane. The chain is A-type ATP synthase subunit F from Methanococcus maripaludis (strain C6 / ATCC BAA-1332).